Consider the following 243-residue polypeptide: 23S rRNA (guanosine-2'-O-)-methyltransferase RlmB (243 aa).

S-adenosyl-L-methionine-binding residues include G196, I216, and L225.

Belongs to the class IV-like SAM-binding methyltransferase superfamily. RNA methyltransferase TrmH family. RlmB subfamily. In terms of assembly, homodimer.

Its subcellular location is the cytoplasm. It catalyses the reaction guanosine(2251) in 23S rRNA + S-adenosyl-L-methionine = 2'-O-methylguanosine(2251) in 23S rRNA + S-adenosyl-L-homocysteine + H(+). Its function is as follows. Specifically methylates the ribose of guanosine 2251 in 23S rRNA. The sequence is that of 23S rRNA (guanosine-2'-O-)-methyltransferase RlmB from Shigella flexneri.